The primary structure comprises 813 residues: MLLLALLAFLLVSRTIARPSYSMVDDTTPEPEEPPAKYQISKADVFPVLPGEPLDLRCPLADGPLVTWTKDGAKLEVNNRTLIVRTYLQIKESTTRDSGLYACSVLKNSHFFHVNVTEASSSGDDEDDNDGSEDFTNDNNNIRAPYWTNTEKMEKKLHAVSAANTVKLRCPAREPHPSNEWLKNGKEFKQEHRIGGYKVRNQHWSLIMESVVPSDKGIYTCIVENEHGSINHTYHLDVIERSSHRPILQAGLPANTTAVVGGDAEFVCKVYSDAQPHIRWVRYIEKNGSRFGVDGLPYFKVLKAAGVNVTDEEIEVLYVRNVSFEDAGEYTCIAGNSIGISQHSAWLTVHPAPVNPLEDNPVPYYMEIGIYSTGIFIIFCMVVVCVVCRMRQGAKKKKNFTGPPVHKLTKRIPLHRQVTVSADSSSSMNSTTPLVRITTRLLNSTDAMPLANVSEYELPHDPMWEFSRDKLTLGKPLGEGCFGQVVMAEALGIDKERPKESVTVAVKMLKDNATEKDLADLVSEMEMMKMIGKHKNIINLLGACTQGGTLYVIVEYAAKGNLRQYLRARRPLEMEYSFDVTRVPDEQMTFKDLVSCTYQIARGMEYLASQKCIHRDLAARNVLVTENNVMKIADFGLARDVNNIDYYKKTSNGRLPVKWMAPEALFDRVYTHQSDVWSFGVLMWEIFTLGGSPYPGIPVEELFKLLKEGHRMDKPANCTNELYMMMRDCWHAIPSHRPTFKQLVEDLDRILTLTTNEEYLDLSAPLEQYSPSFPDSSCSASSSSGDDSVFSPDPMPHDPCLPKFQHVNGVVKT.

An N-terminal signal peptide occupies residues 1-14 (MLLLALLAFLLVSR). Residues 18 to 367 (RPSYSMVDDT…EDNPVPYYME (350 aa)) are Extracellular-facing. The region spanning 21 to 117 (YSMVDDTTPE…NSHFFHVNVT (97 aa)) is the Ig-like C2-type 1 domain. A disulfide bridge connects residues Cys-58 and Cys-103. 2 N-linked (GlcNAc...) asparagine glycosylation sites follow: Asn-79 and Asn-115. Residues 119 to 143 (ASSSGDDEDDNDGSEDFTNDNNNIR) are disordered. A compositionally biased stretch (acidic residues) spans 123 to 136 (GDDEDDNDGSEDFT). Ig-like C2-type domains are found at residues 145 to 237 (PYWT…YHLD) and 246 to 348 (PILQ…AWLT). The segment at 152 to 169 (KMEKKLHAVSAANTVKLR) is heparin-binding. Cysteines 170 and 221 form a disulfide. N-linked (GlcNAc...) asparagine glycosylation is found at Asn-231, Asn-255, Asn-287, Asn-308, and Asn-321. Cys-268 and Cys-332 are joined by a disulfide. The chain crosses the membrane as a helical span at residues 368–388 (IGIYSTGIFIIFCMVVVCVVC). Over 389 to 813 (RMRQGAKKKK…FQHVNGVVKT (425 aa)) the chain is Cytoplasmic. Phosphotyrosine; by autocatalysis is present on Tyr-456. The 290-residue stretch at 471-760 (LTLGKPLGEG…LTLTTNEEYL (290 aa)) folds into the Protein kinase domain. ATP-binding positions include 477-485 (LGEGCFGQV), Lys-507, 555-557 (EYA), and Asn-561. The residue at position 576 (Tyr-576) is a Phosphotyrosine; by autocatalysis. Catalysis depends on Asp-616, which acts as the Proton acceptor. Tyr-646, Tyr-647, and Tyr-759 each carry phosphotyrosine; by autocatalysis. The segment covering 771-792 (PSFPDSSCSASSSSGDDSVFSP) has biased composition (low complexity). A disordered region spans residues 771-801 (PSFPDSSCSASSSSGDDSVFSPDPMPHDPCL).

Belongs to the protein kinase superfamily. Tyr protein kinase family. Fibroblast growth factor receptor subfamily. In terms of assembly, monomer. Homodimer after ligand binding. Autophosphorylated. Binding of FGF family members together with heparan sulfate proteoglycan or heparin promotes receptor dimerization and autophosphorylation on tyrosine residues. Autophosphorylation occurs in trans between the two FGFR molecules present in the dimer. Post-translationally, N-glycosylated in the endoplasmic reticulum. The N-glycan chains undergo further maturation to an Endo H-resistant form in the Golgi apparatus. In terms of processing, ubiquitinated. FGFR2 is rapidly ubiquitinated after autophosphorylation, leading to internalization and degradation. Subject to degradation both in lysosomes and by the proteasome. In terms of tissue distribution, expressed in the anterior neural plate in early neurula stage embryos. Later in development, the protein is also expressed in the eye anlagen, midbrain-hindbrain boundary and otic vesicle.

The protein localises to the cell membrane. Its subcellular location is the golgi apparatus. It is found in the cytoplasmic vesicle. It catalyses the reaction L-tyrosyl-[protein] + ATP = O-phospho-L-tyrosyl-[protein] + ADP + H(+). Its activity is regulated as follows. Present in an inactive conformation in the absence of bound ligand. Ligand binding leads to dimerization and activation by autophosphorylation on tyrosine residues. Functionally, tyrosine-protein kinase that acts as a cell-surface receptor for fibroblast growth factors and plays an essential role in the regulation of cell proliferation, differentiation, migration and apoptosis, and in the regulation of embryonic development. Required for normal embryonic patterning, limb bud development, lung morphogenesis, osteogenesis and skin development. Plays an essential role in the regulation of osteoblast differentiation, proliferation and apoptosis, and is required for normal skeleton development. Promotes cell proliferation in keratinocytes and immature osteoblasts, but promotes apoptosis in differentiated osteoblasts. Phosphorylates PLCG1, FRS2 and PAK4. Ligand binding leads to the activation of several signaling cascades. Activation of PLCG1 leads to the production of the cellular signaling molecules diacylglycerol and inositol 1,4,5-trisphosphate. Phosphorylation of FRS2 triggers recruitment of GRB2, GAB1, PIK3R1 and SOS1, and mediates activation of RAS, MAPK1/ERK2, MAPK3/ERK1 and the MAP kinase signaling pathway, as well as of the AKT1 signaling pathway. FGFR2 signaling is down-regulated by ubiquitination, internalization and degradation. Mutations that lead to constitutive kinase activation or impair normal FGFR2 maturation, internalization and degradation lead to aberrant signaling. Over-expressed FGFR2 promotes activation of STAT1. The chain is Fibroblast growth factor receptor 2 (fgfr2) from Xenopus laevis (African clawed frog).